Reading from the N-terminus, the 316-residue chain is N-acetyl-gamma-glutamyl-phosphate reductase (316 aa).

Cysteine 136 is an active-site residue.

This sequence belongs to the NAGSA dehydrogenase family. Type 1 subfamily.

It is found in the cytoplasm. The enzyme catalyses N-acetyl-L-glutamate 5-semialdehyde + phosphate + NADP(+) = N-acetyl-L-glutamyl 5-phosphate + NADPH + H(+). It participates in amino-acid biosynthesis; L-arginine biosynthesis; N(2)-acetyl-L-ornithine from L-glutamate: step 3/4. In terms of biological role, catalyzes the NADPH-dependent reduction of N-acetyl-5-glutamyl phosphate to yield N-acetyl-L-glutamate 5-semialdehyde. The chain is N-acetyl-gamma-glutamyl-phosphate reductase from Xanthomonas euvesicatoria pv. vesicatoria (strain 85-10) (Xanthomonas campestris pv. vesicatoria).